Here is a 944-residue protein sequence, read N- to C-terminus: Leucine--tRNA ligase (944 aa).

The short motif at 40-51 (PYPSGAGLHVGH) is the 'HIGH' region element. A 'KMSKS' region motif is present at residues 718-722 (KMSKS). Residue K721 coordinates ATP.

Belongs to the class-I aminoacyl-tRNA synthetase family.

It is found in the cytoplasm. It catalyses the reaction tRNA(Leu) + L-leucine + ATP = L-leucyl-tRNA(Leu) + AMP + diphosphate. In Bacteroides thetaiotaomicron (strain ATCC 29148 / DSM 2079 / JCM 5827 / CCUG 10774 / NCTC 10582 / VPI-5482 / E50), this protein is Leucine--tRNA ligase.